Consider the following 450-residue polypeptide: MREVISMHVGQAGVQMGNACWELYCLEHGIQPDGQMPSDKTCGGGDDSFNTFFSETGAGKHVPRAIFVDLEPTVIDEVRTGIYRQLFHPEQLITGKEDAANNYARGHYTIGKEIIDIVLDRTRKLADQCTGLQGFLIFHSFGGGTGSGFTSLLMERLSVDYGKKSKLEFAVYPAPQVSTAVVEPYNSILTTHTTLEHSDCAFMVDNEAIYDICRRNLDIERPSYTNLNRLIGQIVSSITASLRFDGALNVDLTEFQTNLVPYPRIHFPLATYAPVISAEKAYHEQLSVADITNACFEPANQMVKCDPRHGKYMACCLLYRGDVVPKDVNSAIAAIKTKRSIQFVDWCPTGFKVGINYQPPTVVPGGDLAKVQRAVCMLSNTTAIAEAWARLDHKFDLMYAKRAFVHWYVGEGMEEGEFSEAREDMAALEKDYEEVGTDSVGEEDEEGEEY.

Gln11 lines the GTP pocket. Lys40 is subject to N6-acetyllysine. 7 residues coordinate GTP: Glu71, Ser140, Gly144, Thr145, Thr179, Asn206, and Asn228. Glu71 is a binding site for Mg(2+). Glu254 is a catalytic residue. The disordered stretch occupies residues 431-450; that stretch reads DYEEVGTDSVGEEDEEGEEY.

This sequence belongs to the tubulin family. Dimer of alpha and beta chains. A typical microtubule is a hollow water-filled tube with an outer diameter of 25 nm and an inner diameter of 15 nM. Alpha-beta heterodimers associate head-to-tail to form protofilaments running lengthwise along the microtubule wall with the beta-tubulin subunit facing the microtubule plus end conferring a structural polarity. Microtubules usually have 13 protofilaments but different protofilament numbers can be found in some organisms and specialized cells. Requires Mg(2+) as cofactor. In terms of processing, some glutamate residues at the C-terminus are polyglycylated, resulting in polyglycine chains on the gamma-carboxyl group. Glycylation is mainly limited to tubulin incorporated into axonemes (cilia and flagella) whereas glutamylation is prevalent in neuronal cells, centrioles, axonemes, and the mitotic spindle. Both modifications can coexist on the same protein on adjacent residues, and lowering polyglycylation levels increases polyglutamylation, and reciprocally. The precise function of polyglycylation is still unclear. Post-translationally, some glutamate residues at the C-terminus are polyglutamylated, resulting in polyglutamate chains on the gamma-carboxyl group. Polyglutamylation plays a key role in microtubule severing by spastin (SPAST). SPAST preferentially recognizes and acts on microtubules decorated with short polyglutamate tails: severing activity by SPAST increases as the number of glutamates per tubulin rises from one to eight, but decreases beyond this glutamylation threshold. Acetylation of alpha chains at Lys-40 is located inside the microtubule lumen. This modification has been correlated with increased microtubule stability, intracellular transport and ciliary assembly. In terms of processing, undergoes a tyrosination/detyrosination cycle, the cyclic removal and re-addition of a C-terminal tyrosine residue by the enzymes tubulin tyrosine carboxypeptidase (MATCAP, VASH1 or VASH2) and tubulin tyrosine ligase (TTL), respectively. Post-translationally, tyrosination promotes microtubule interaction with CAP-Gly microtubule plus-end tracking proteins. Tyrosinated tubulins regulate the initiation of dynein-driven motility. Detyrosination is involved in metaphase plate congression by guiding chromosomes during mitosis. Detyrosination increases microtubules-dependent mechanotransduction in dystrophic cardiac and skeletal muscle. In cardiomyocytes, detyrosinated microtubules are required to resist to contractile compression during contraction.

Its subcellular location is the cytoplasm. The protein localises to the cytoskeleton. The catalysed reaction is GTP + H2O = GDP + phosphate + H(+). Tubulin is the major constituent of microtubules, a cylinder consisting of laterally associated linear protofilaments composed of alpha- and beta-tubulin heterodimers. Microtubules grow by the addition of GTP-tubulin dimers to the microtubule end, where a stabilizing cap forms. Below the cap, tubulin dimers are in GDP-bound state, owing to GTPase activity of alpha-tubulin. This chain is Tubulin alpha chain, found in Oncorhynchus keta (Chum salmon).